The primary structure comprises 314 residues: Acetylglutamate kinase (314 aa).

Residues 76 to 77, Arg-98, and Asn-199 contribute to the substrate site; that span reads GG.

Belongs to the acetylglutamate kinase family. ArgB subfamily.

The protein resides in the cytoplasm. The catalysed reaction is N-acetyl-L-glutamate + ATP = N-acetyl-L-glutamyl 5-phosphate + ADP. Its pathway is amino-acid biosynthesis; L-arginine biosynthesis; N(2)-acetyl-L-ornithine from L-glutamate: step 2/4. In terms of biological role, catalyzes the ATP-dependent phosphorylation of N-acetyl-L-glutamate. This chain is Acetylglutamate kinase, found in Bifidobacterium longum (strain DJO10A).